The primary structure comprises 87 residues: HssA/B-like protein 57 (87 aa).

It belongs to the hssA/B family.

In Dictyostelium discoideum (Social amoeba), this protein is HssA/B-like protein 57 (hssl57).